Consider the following 510-residue polypeptide: ATP synthase subunit alpha (510 aa).

170 to 177 (GDRQTGKT) is a binding site for ATP.

Belongs to the ATPase alpha/beta chains family. F-type ATPases have 2 components, CF(1) - the catalytic core - and CF(0) - the membrane proton channel. CF(1) has five subunits: alpha(3), beta(3), gamma(1), delta(1), epsilon(1). CF(0) has three main subunits: a(1), b(2) and c(9-12). The alpha and beta chains form an alternating ring which encloses part of the gamma chain. CF(1) is attached to CF(0) by a central stalk formed by the gamma and epsilon chains, while a peripheral stalk is formed by the delta and b chains.

The protein resides in the cell inner membrane. It carries out the reaction ATP + H2O + 4 H(+)(in) = ADP + phosphate + 5 H(+)(out). Its function is as follows. Produces ATP from ADP in the presence of a proton gradient across the membrane. The alpha chain is a regulatory subunit. The chain is ATP synthase subunit alpha from Dictyoglomus thermophilum (strain ATCC 35947 / DSM 3960 / H-6-12).